The primary structure comprises 296 residues: tRNA dimethylallyltransferase (296 aa).

10–17 provides a ligand contact to ATP; the sequence is GPTASGKT. 12-17 contributes to the substrate binding site; sequence TASGKT. The tract at residues 35 to 38 is interaction with substrate tRNA; the sequence is DSRQ.

The protein belongs to the IPP transferase family. As to quaternary structure, monomer. The cofactor is Mg(2+).

It catalyses the reaction adenosine(37) in tRNA + dimethylallyl diphosphate = N(6)-dimethylallyladenosine(37) in tRNA + diphosphate. In terms of biological role, catalyzes the transfer of a dimethylallyl group onto the adenine at position 37 in tRNAs that read codons beginning with uridine, leading to the formation of N6-(dimethylallyl)adenosine (i(6)A). The protein is tRNA dimethylallyltransferase of Synechococcus sp. (strain RCC307).